Consider the following 160-residue polypeptide: S-ribosylhomocysteine lyase (160 aa).

Fe cation-binding residues include His-57, His-61, and Cys-127.

The protein belongs to the LuxS family. In terms of assembly, homodimer. It depends on Fe cation as a cofactor.

It catalyses the reaction S-(5-deoxy-D-ribos-5-yl)-L-homocysteine = (S)-4,5-dihydroxypentane-2,3-dione + L-homocysteine. Involved in the synthesis of autoinducer 2 (AI-2) which is secreted by bacteria and is used to communicate both the cell density and the metabolic potential of the environment. The regulation of gene expression in response to changes in cell density is called quorum sensing. Catalyzes the transformation of S-ribosylhomocysteine (RHC) to homocysteine (HC) and 4,5-dihydroxy-2,3-pentadione (DPD). This is S-ribosylhomocysteine lyase from Streptococcus suis (strain 98HAH33).